Consider the following 215-residue polypeptide: Cytochrome b6 (215 aa).

Residues 32–52 (IFYCLGGITLTCFLVQVATGF) form a helical membrane-spanning segment. A heme c-binding site is contributed by C35. Residues H86 and H100 each contribute to the heme b site. A run of 3 helical transmembrane segments spans residues 90 to 110 (ASMM…TGGF), 116 to 136 (LTWV…VTGY), and 186 to 206 (LHTF…FLMI). Heme b-binding residues include H187 and H202.

It belongs to the cytochrome b family. PetB subfamily. In terms of assembly, the 4 large subunits of the cytochrome b6-f complex are cytochrome b6, subunit IV (17 kDa polypeptide, PetD), cytochrome f and the Rieske protein, while the 4 small subunits are PetG, PetL, PetM and PetN. The complex functions as a dimer. Heme b is required as a cofactor. It depends on heme c as a cofactor.

It localises to the plastid. The protein localises to the chloroplast thylakoid membrane. Functionally, component of the cytochrome b6-f complex, which mediates electron transfer between photosystem II (PSII) and photosystem I (PSI), cyclic electron flow around PSI, and state transitions. In Morus indica (Mulberry), this protein is Cytochrome b6.